Consider the following 420-residue polypeptide: Zinc finger protein Pegasus (420 aa).

A Glycyl lysine isopeptide (Lys-Gly) (interchain with G-Cter in SUMO2) cross-link involves residue Lys-5. 3 consecutive C2H2-type zinc fingers follow at residues 82-104 (LKCR…IRIH), 110-132 (HRCH…MRSH), and 138-161 (YKCE…RRKH). A Glycyl lysine isopeptide (Lys-Gly) (interchain with G-Cter in SUMO2) cross-link involves residue Lys-185. Composition is skewed to polar residues over residues 223 to 236 (QTDS…TTPT) and 262 to 273 (LSSLPPENQNPA). Disordered stretches follow at residues 223–247 (QTDS…QELM) and 262–356 (LSSL…PALP). Low complexity predominate over residues 290–311 (QPSTQAVVSAVSASIPQSSSPT). Polar residues predominate over residues 332-349 (SEPSAHTSTPSIGNSQPS). The segment at 364 to 387 (HHCQHCDMYFFADNILYTIHMGCH) adopts a C2H2-type 4; degenerate zinc-finger fold. The segment at 393–417 (FQCNICGCKCKNKYDFACHFARGQH) adopts a C2H2-type 5 zinc-finger fold.

Belongs to the Ikaros C2H2-type zinc-finger protein family. Self-associates. Interacts with other family members; IKZF1, IKZF2, IKZF3 and IKZF4.

Its subcellular location is the nucleus. Functionally, transcriptional repressor that binds the core 5'GNNTGTNG-3' DNA consensus sequence. Involved in megakaryocyte differentiation. This is Zinc finger protein Pegasus (IKZF5) from Pongo abelii (Sumatran orangutan).